The primary structure comprises 198 residues: Glycerol-3-phosphate acyltransferase (198 aa).

5 consecutive transmembrane segments (helical) span residues 10-30, 57-77, 86-106, 118-138, and 160-180; these read LIPI…WILV, GISF…ILIL, IMYL…WFLF, VVLS…AVVF, and AVTE…IVLI.

It belongs to the PlsY family. As to quaternary structure, probably interacts with PlsX.

Its subcellular location is the cell inner membrane. It catalyses the reaction an acyl phosphate + sn-glycerol 3-phosphate = a 1-acyl-sn-glycero-3-phosphate + phosphate. It functions in the pathway lipid metabolism; phospholipid metabolism. Catalyzes the transfer of an acyl group from acyl-phosphate (acyl-PO(4)) to glycerol-3-phosphate (G3P) to form lysophosphatidic acid (LPA). This enzyme utilizes acyl-phosphate as fatty acyl donor, but not acyl-CoA or acyl-ACP. In Anaplasma marginale (strain St. Maries), this protein is Glycerol-3-phosphate acyltransferase.